We begin with the raw amino-acid sequence, 377 residues long: Homoserine O-succinyltransferase (377 aa).

An AB hydrolase-1 domain is found at 50-358 (NAILVCHALS…PSTYGHDSFL (309 aa)). The active-site Nucleophile is Ser-156. Residue Arg-226 participates in substrate binding. Catalysis depends on residues Asp-321 and His-354. Residue Asp-355 coordinates substrate.

The protein belongs to the AB hydrolase superfamily. MetX family. In terms of assembly, homodimer.

It localises to the cytoplasm. The catalysed reaction is L-homoserine + succinyl-CoA = O-succinyl-L-homoserine + CoA. It participates in amino-acid biosynthesis; L-methionine biosynthesis via de novo pathway; O-succinyl-L-homoserine from L-homoserine: step 1/1. Functionally, transfers a succinyl group from succinyl-CoA to L-homoserine, forming succinyl-L-homoserine. In Nitrosomonas eutropha (strain DSM 101675 / C91 / Nm57), this protein is Homoserine O-succinyltransferase.